A 363-amino-acid polypeptide reads, in one-letter code: Crh-like protein 3 (363 aa).

The first 19 residues, 1 to 19 (MSLLYLVALFVASICSVTA), serve as a signal peptide directing secretion. Residues Cys25 and Cys32 are joined by a disulfide bond. The GH16 domain occupies 26–237 (NPLTTTCPPD…YSKAPFTMVL (212 aa)). Residues Asn41, Asn47, and Asn56 are each glycosylated (N-linked (GlcNAc...) asparagine). Catalysis depends on Glu118, which acts as the Nucleophile. Glu122 functions as the Proton donor in the catalytic mechanism. Glu122 lines the chitin pocket. Residues Asn127, Asn141, and Asn161 are each glycosylated (N-linked (GlcNAc...) asparagine). Arg203, Trp207, and Thr218 together coordinate chitin. 2 N-linked (GlcNAc...) asparagine glycosylation sites follow: Asn252 and Asn269. A helical transmembrane segment spans residues 298 to 318 (VYIGAGCVGAALLAGFIFFFI).

Belongs to the glycosyl hydrolase 16 family. CRH1 subfamily. In terms of processing, the GPI-like anchor contains a phosphoceramide lipid group. The anchor position has not been determined.

Its subcellular location is the cell membrane. The protein resides in the secreted. It is found in the cell wall. The enzyme catalyses Random endo-hydrolysis of N-acetyl-beta-D-glucosaminide (1-&gt;4)-beta-linkages in chitin and chitodextrins.. In terms of biological role, dual chitinase/transglycosylase that plays a role in cell wall architecture. Chitinase and transglycosylase activities are coupled. Required for the polysaccharide cross-linking at the septa and the cell wall. More specifically, transfers chitin to 1,6-beta-glucan in the cell wall. The protein is Crh-like protein 3 of Aspergillus fumigatus (strain ATCC MYA-4609 / CBS 101355 / FGSC A1100 / Af293) (Neosartorya fumigata).